We begin with the raw amino-acid sequence, 240 residues long: Large ribosomal subunit protein uL2 (240 aa).

Residues 1-20 (MGKRLQSQNRGKGTPRYTSP) show a composition bias toward polar residues. Disordered regions lie at residues 1-33 (MGKRLQSQNRGKGTPRYTSPTHKRKGAVKYRKF) and 204-240 (PFGGGNTQHAGKPTTISRHTSPGRKVGHIAARRTGKR). Composition is skewed to basic residues over residues 21–30 (THKRKGAVKY) and 224–240 (SPGRKVGHIAARRTGKR).

Belongs to the universal ribosomal protein uL2 family. Part of the 50S ribosomal subunit. Forms a bridge to the 30S subunit in the 70S ribosome.

One of the primary rRNA binding proteins. Required for association of the 30S and 50S subunits to form the 70S ribosome, for tRNA binding and peptide bond formation. It has been suggested to have peptidyltransferase activity; this is somewhat controversial. Makes several contacts with the 16S rRNA in the 70S ribosome. The chain is Large ribosomal subunit protein uL2 from Methanococcus aeolicus (strain ATCC BAA-1280 / DSM 17508 / OCM 812 / Nankai-3).